The sequence spans 686 residues: tRNA wybutosine-synthesizing protein 4 (686 aa).

Residues Met-1–Ala-10 show a composition bias toward basic and acidic residues. Residues Met-1–Ala-21 are disordered. S-adenosyl-L-methionine-binding positions include Arg-59, Gly-89, Asp-114, Asp-161–Leu-162, and Glu-188.

It belongs to the methyltransferase superfamily. LCMT family. In terms of assembly, interacts with RNF144B/IBRDC2.

It catalyses the reaction 7-[(3S)-3-amino-3-carboxypropyl]wyosine(37) in tRNA(Phe) + S-adenosyl-L-methionine = 7-[(3S)-(3-amino-3-methoxycarbonyl)propyl]wyosine(37) in tRNA(Phe) + S-adenosyl-L-homocysteine. It carries out the reaction 7-[(3S)-(3-amino-3-methoxycarbonyl)propyl]wyosine(37) in tRNA(Phe) + S-adenosyl-L-methionine + CO2 = wybutosine(37) in tRNA(Phe) + S-adenosyl-L-homocysteine + 2 H(+). It participates in tRNA modification; wybutosine-tRNA(Phe) biosynthesis. In terms of biological role, probable S-adenosyl-L-methionine-dependent methyltransferase that acts as a component of the wybutosine biosynthesis pathway. Wybutosine is a hyper modified guanosine with a tricyclic base found at the 3'-position adjacent to the anticodon of eukaryotic phenylalanine tRNA. May methylate the carboxyl group of leucine residues to form alpha-leucine ester residues. This chain is tRNA wybutosine-synthesizing protein 4 (LCMT2), found in Homo sapiens (Human).